We begin with the raw amino-acid sequence, 884 residues long: E3 ubiquitin-protein ligase BRE1-like 1 (884 aa).

Residues 1 to 37 (MGSTGEPDRKRRLSSSVAPGGGAPVSPAKRLAVAPTS) form a disordered region. Positions 49-86 (YKNQKLSEQLEAHKFEYRALENKFAGLKEKQRTHNETL) form a coiled coil. Positions 107 to 127 (KSGSPNSSPGSGHNNVQKDGT) are disordered. The span at 108–121 (SGSPNSSPGSGHNN) shows a compositional bias: low complexity. 4 coiled-coil regions span residues 216–541 (LNNV…ELKL), 580–663 (SKLE…LQQI), 696–762 (RNLQ…QSLD), and 789–827 (KKRIEDDLEVMSRKASSLRAKARESAVLEKLRHEVKEYR). The RING-type zinc-finger motif lies at 832 to 871 (CGICHDRQKEVVITKCYHLFCNQCIQKSLGNRQRRCPSCS).

This sequence belongs to the BRE1 family. Interacts with SKIPA. Interacts with HUB2.

It is found in the nucleus. It carries out the reaction S-ubiquitinyl-[E2 ubiquitin-conjugating enzyme]-L-cysteine + [acceptor protein]-L-lysine = [E2 ubiquitin-conjugating enzyme]-L-cysteine + N(6)-ubiquitinyl-[acceptor protein]-L-lysine.. It participates in protein modification; protein ubiquitination. Its function is as follows. E3 ubiquitin-protein ligase that monoubiquitinates H2B to form H2BK143ub1. H2BK143ub1 gives a specific tag for epigenetic transcriptional activation and is a prerequisite for H3 Lys-4 methylation (H3K4me). It thereby plays a central role in histone code and gene regulation. H2B monoubiquitination (H2BK143ub1), mediated by HUB1, modulates transcriptional regulation of anther development, likely by promoting histone H3K4 dimethylation (H3K4me2) in the chromatin of the key tapetum degradation-related genes C4, CP1 and UDT1. This Oryza sativa subsp. japonica (Rice) protein is E3 ubiquitin-protein ligase BRE1-like 1.